The sequence spans 182 residues: Small ribosomal subunit protein uS4c (182 aa).

Residues 13–32 form a disordered region; that stretch reads GLTSKRPRSGSDLKNPLRSG. An S4 RNA-binding domain is found at 82 to 143; sequence MRLDNILFRL…KQRSKALIQN (62 aa).

The protein belongs to the universal ribosomal protein uS4 family. Part of the 30S ribosomal subunit. Contacts protein S5. The interaction surface between S4 and S5 is involved in control of translational fidelity.

It is found in the plastid. Its subcellular location is the chloroplast. In terms of biological role, one of the primary rRNA binding proteins, it binds directly to 16S rRNA where it nucleates assembly of the body of the 30S subunit. Its function is as follows. With S5 and S12 plays an important role in translational accuracy. The sequence is that of Small ribosomal subunit protein uS4c (rps4) from Scadoxus puniceus (Paintbrush lily).